The chain runs to 211 residues: ATP phosphoribosyltransferase (211 aa).

Belongs to the ATP phosphoribosyltransferase family. Short subfamily. Heteromultimer composed of HisG and HisZ subunits.

The protein localises to the cytoplasm. The catalysed reaction is 1-(5-phospho-beta-D-ribosyl)-ATP + diphosphate = 5-phospho-alpha-D-ribose 1-diphosphate + ATP. Its pathway is amino-acid biosynthesis; L-histidine biosynthesis; L-histidine from 5-phospho-alpha-D-ribose 1-diphosphate: step 1/9. Functionally, catalyzes the condensation of ATP and 5-phosphoribose 1-diphosphate to form N'-(5'-phosphoribosyl)-ATP (PR-ATP). Has a crucial role in the pathway because the rate of histidine biosynthesis seems to be controlled primarily by regulation of HisG enzymatic activity. This is ATP phosphoribosyltransferase from Pseudomonas entomophila (strain L48).